Reading from the N-terminus, the 186-residue chain is Probable peptidyl-tRNA hydrolase 2 (186 aa).

It belongs to the PTH2 family.

It carries out the reaction an N-acyl-L-alpha-aminoacyl-tRNA + H2O = an N-acyl-L-amino acid + a tRNA + H(+). In terms of biological role, the natural substrate for this enzyme may be peptidyl-tRNAs which drop off the ribosome during protein synthesis. The polypeptide is Probable peptidyl-tRNA hydrolase 2 (Drosophila melanogaster (Fruit fly)).